The chain runs to 538 residues: Succinyl-CoA:acetate CoA-transferase (538 aa).

Position 305–309 (305–309 (GVGSV)) interacts with CoA. Glutamate 330 acts as the 5-glutamyl coenzyme A thioester intermediate in catalysis. CoA contacts are provided by asparagine 420 and glycine 424.

It belongs to the acetyl-CoA hydrolase/transferase family.

It catalyses the reaction succinyl-CoA + acetate = succinate + acetyl-CoA. In terms of biological role, forms succinyl-CoA from succinate and acetyl-CoA. The polypeptide is Succinyl-CoA:acetate CoA-transferase (Clostridium kluyveri (strain ATCC 8527 / DSM 555 / NBRC 12016 / NCIMB 10680 / K1)).